Here is a 901-residue protein sequence, read N- to C-terminus: Valine--tRNA ligase (901 aa).

Residues 536-540 carry the 'KMSKS' region motif; the sequence is KLSKS. Lys-539 provides a ligand contact to ATP. The stretch at 831–901 forms a coiled coil; it reads LEGLISFEKE…KLQGNLEVLS (71 aa).

This sequence belongs to the class-I aminoacyl-tRNA synthetase family. ValS type 1 subfamily. In terms of assembly, monomer.

Its subcellular location is the cytoplasm. It catalyses the reaction tRNA(Val) + L-valine + ATP = L-valyl-tRNA(Val) + AMP + diphosphate. Catalyzes the attachment of valine to tRNA(Val). As ValRS can inadvertently accommodate and process structurally similar amino acids such as threonine, to avoid such errors, it has a 'posttransfer' editing activity that hydrolyzes mischarged Thr-tRNA(Val) in a tRNA-dependent manner. In Chlorobaculum tepidum (strain ATCC 49652 / DSM 12025 / NBRC 103806 / TLS) (Chlorobium tepidum), this protein is Valine--tRNA ligase.